The primary structure comprises 637 residues: Anthranilate synthase, phenazine specific (637 aa).

The segment at 1–434 (MSQTAAHLME…QREQIQADFS (434 aa)) is anthranilate synthase component I. The 192-residue stretch at 437–628 (QVLIVDAEDT…LRHALIHTPV (192 aa)) folds into the Glutamine amidotransferase type-1 domain. Catalysis depends on for GATase activity residues cysteine 517, histidine 602, and glutamate 604.

The enzyme catalyses chorismate + L-glutamine = anthranilate + pyruvate + L-glutamate + H(+). It functions in the pathway antibiotic biosynthesis; phenazine biosynthesis. Functionally, involved in the biosynthesis of the antibiotic, phenazine, a nitrogen-containing heterocyclic molecule having important roles in virulence, competition and biological control. This chain is Anthranilate synthase, phenazine specific (phzB), found in Pseudomonas chlororaphis (Pseudomonas aureofaciens).